Reading from the N-terminus, the 357-residue chain is UPF0283 membrane protein BMEA_A1074 (357 aa).

Residues 1–36 (MSDKTPRKPTAFRLEQPARVSAASEQEEPRRPRAVK) are disordered. Positions 27–36 (EEPRRPRAVK) are enriched in basic and acidic residues. Helical transmembrane passes span 78 to 98 (ILFG…TEDL) and 109 to 129 (LGWT…AIIL).

Belongs to the UPF0283 family.

It localises to the cell inner membrane. This Brucella melitensis biotype 2 (strain ATCC 23457) protein is UPF0283 membrane protein BMEA_A1074.